The chain runs to 598 residues: uncharacterized protein (598 aa).

The segment covering 1 to 23 (MSHEGSRQARDRGVTRSKAEKAR) has biased composition (basic and acidic residues). Disordered stretches follow at residues 1 to 32 (MSHEGSRQARDRGVTRSKAEKARPPTQPVPQV), 151 to 190 (FHNEEPGNPDQFLLGSSWDKESQKPTQPSEPSAEPKVTPR), and 222 to 241 (PSKESLRSTAEGERVYSPQS). A compositionally biased stretch (basic and acidic residues) spans 225–235 (ESLRSTAEGER). Residues serine 238 and serine 242 each carry the phosphoserine modification. Disordered regions lie at residues 366–396 (RRSQAGTATSACESQALSSRAPSKPHVSSPR) and 551–571 (AEEGTPQAPEQQPIQTGVSKP). Polar residues-rich tracts occupy residues 369 to 386 (QAGTATSACESQALSSRA) and 558 to 569 (APEQQPIQTGVS).

This is an uncharacterized protein from Mus musculus (Mouse).